We begin with the raw amino-acid sequence, 208 residues long: Large ribosomal subunit protein uL4 (208 aa).

Positions 44-79 are disordered; it reads QRQGTHKSKERSEISGSTRKIGRQKGGGGARRGDMN.

This sequence belongs to the universal ribosomal protein uL4 family. Part of the 50S ribosomal subunit.

Functionally, one of the primary rRNA binding proteins, this protein initially binds near the 5'-end of the 23S rRNA. It is important during the early stages of 50S assembly. It makes multiple contacts with different domains of the 23S rRNA in the assembled 50S subunit and ribosome. Its function is as follows. Forms part of the polypeptide exit tunnel. The sequence is that of Large ribosomal subunit protein uL4 from Bacteroides thetaiotaomicron (strain ATCC 29148 / DSM 2079 / JCM 5827 / CCUG 10774 / NCTC 10582 / VPI-5482 / E50).